Consider the following 94-residue polypeptide: Small ribosomal subunit protein bS6 (94 aa).

Belongs to the bacterial ribosomal protein bS6 family.

In terms of biological role, binds together with bS18 to 16S ribosomal RNA. This is Small ribosomal subunit protein bS6 from Desulforudis audaxviator (strain MP104C).